Consider the following 296-residue polypeptide: Peptide transport system permease protein SapC (296 aa).

At 1–28 (MPYDSVYSEKRPPGTLRTAWRKFYSDAS) the chain is on the cytoplasmic side. The helical transmembrane segment at 29-49 (AMVGLYGCAGLAVLCIFGGWF) threads the bilayer. Residues 50-98 (APYGIDQQFLGYQLLPPSWSRYGEVSFFLGTDDLGRDVLSRLLSGAAPT) lie on the Periplasmic side of the membrane. The helical transmembrane segment at 99–119 (VGGAFVVTLAATICGLVLGTF) threads the bilayer. The region spanning 99 to 284 (VGGAFVVTLA…ISVLLVNLLG (186 aa)) is the ABC transmembrane type-1 domain. The Cytoplasmic segment spans residues 120–133 (AGATHGLRSAVLNH). A helical transmembrane segment spans residues 134–154 (ILDTLLAIPSLLLAIIVVAFA). Over 155 to 196 (GPSLSHAMFAVWLALLPRMVRSIYSMVHDELEKEYVIAARLD) the chain is Periplasmic. The chain crosses the membrane as a helical span at residues 197 to 217 (GASTLNILWFAVMPNITAGLV). At 218–222 (TEITR) the chain is on the cytoplasmic side. Residues 223–243 (ALSMAILDIAALGFLDLGAQL) form a helical membrane-spanning segment. Residues 244-257 (PSPEWGAMLGDALE) lie on the Periplasmic side of the membrane. A helical membrane pass occupies residues 258-278 (LIYVAPWTVMLPGAAIMISVL). Over 279-296 (LVNLLGDGVRRAIIAGVE) the chain is Cytoplasmic.

It belongs to the binding-protein-dependent transport system permease family. OppBC subfamily.

The protein localises to the cell inner membrane. Involved in a peptide intake transport system that plays a role in the resistance to antimicrobial peptides. The sequence is that of Peptide transport system permease protein SapC (sapC) from Escherichia coli O6:H1 (strain CFT073 / ATCC 700928 / UPEC).